Reading from the N-terminus, the 135-residue chain is MPVDFTGYWKMLVNENFEEYLRALDVNVALRKIANLLKPDKEIVQDGDHMIIRTLSTFRNYIMDFQVGKEFEEDLTGIDDRKCMTTVSWDGDKLQCVQKGEKEGRGWTQWIEGDELHLEMRVEGVVCKQVFKKVQ.

The residue at position 9 (Trp9) is an Omega-N-methylarginine. Positions 22-32 (RALDVNVALRK) are important for interaction with STRA6. Positions 41, 63, and 109 each coordinate all-trans-retinol.

This sequence belongs to the calycin superfamily. Fatty-acid binding protein (FABP) family. As to quaternary structure, interacts (only as retinol-free apoprotein) with STRA6. As to expression, detected in nearly all the tissues with higher expression in adult ovary, pancreas, pituitary gland and adrenal gland, and fetal liver.

The protein resides in the cytoplasm. Its subcellular location is the lipid droplet. Its function is as follows. Cytoplasmic retinol-binding protein. Accepts retinol from the transport protein STRA6, and thereby contributes to retinol uptake, storage and retinoid homeostasis. In Homo sapiens (Human), this protein is Retinol-binding protein 1 (RBP1).